The following is an 871-amino-acid chain: DNA mismatch repair protein MutS (871 aa).

ATP is bound at residue 630–637 (GPNMGGKS). Residues 830–849 (KEEPESKSASPVEAALAGIN) form a disordered region.

This sequence belongs to the DNA mismatch repair MutS family.

Its function is as follows. This protein is involved in the repair of mismatches in DNA. It is possible that it carries out the mismatch recognition step. This protein has a weak ATPase activity. The polypeptide is DNA mismatch repair protein MutS (Verminephrobacter eiseniae (strain EF01-2)).